The following is a 227-amino-acid chain: Cytochrome c oxidase subunit 2 (227 aa).

At 1–14 the chain is on the mitochondrial intermembrane side; it reads MAHAAQVGLQDATS. Residues 15-45 traverse the membrane as a helical segment; that stretch reads PIMEELIIFHDHALMIIFLICFLVLYALFLT. Over 46 to 59 the chain is Mitochondrial matrix; sequence LTTKLTNTSISDAQ. The helical transmembrane segment at 60–87 threads the bilayer; it reads EMETVWTILPAIILVLIALPSLRILYMT. Topologically, residues 88 to 227 are mitochondrial intermembrane; the sequence is DEVNDPSFTI…IFEMGPVFTL (140 aa). Cu cation is bound by residues His-161, Cys-196, Glu-198, Cys-200, His-204, and Met-207. Glu-198 is a Mg(2+) binding site.

This sequence belongs to the cytochrome c oxidase subunit 2 family. In terms of assembly, component of the cytochrome c oxidase (complex IV, CIV), a multisubunit enzyme composed of 14 subunits. The complex is composed of a catalytic core of 3 subunits MT-CO1, MT-CO2 and MT-CO3, encoded in the mitochondrial DNA, and 11 supernumerary subunits COX4I, COX5A, COX5B, COX6A, COX6B, COX6C, COX7A, COX7B, COX7C, COX8 and NDUFA4, which are encoded in the nuclear genome. The complex exists as a monomer or a dimer and forms supercomplexes (SCs) in the inner mitochondrial membrane with NADH-ubiquinone oxidoreductase (complex I, CI) and ubiquinol-cytochrome c oxidoreductase (cytochrome b-c1 complex, complex III, CIII), resulting in different assemblies (supercomplex SCI(1)III(2)IV(1) and megacomplex MCI(2)III(2)IV(2)). Found in a complex with TMEM177, COA6, COX18, COX20, SCO1 and SCO2. Interacts with TMEM177 in a COX20-dependent manner. Interacts with COX20. Interacts with COX16. It depends on Cu cation as a cofactor.

It is found in the mitochondrion inner membrane. It carries out the reaction 4 Fe(II)-[cytochrome c] + O2 + 8 H(+)(in) = 4 Fe(III)-[cytochrome c] + 2 H2O + 4 H(+)(out). Its function is as follows. Component of the cytochrome c oxidase, the last enzyme in the mitochondrial electron transport chain which drives oxidative phosphorylation. The respiratory chain contains 3 multisubunit complexes succinate dehydrogenase (complex II, CII), ubiquinol-cytochrome c oxidoreductase (cytochrome b-c1 complex, complex III, CIII) and cytochrome c oxidase (complex IV, CIV), that cooperate to transfer electrons derived from NADH and succinate to molecular oxygen, creating an electrochemical gradient over the inner membrane that drives transmembrane transport and the ATP synthase. Cytochrome c oxidase is the component of the respiratory chain that catalyzes the reduction of oxygen to water. Electrons originating from reduced cytochrome c in the intermembrane space (IMS) are transferred via the dinuclear copper A center (CU(A)) of subunit 2 and heme A of subunit 1 to the active site in subunit 1, a binuclear center (BNC) formed by heme A3 and copper B (CU(B)). The BNC reduces molecular oxygen to 2 water molecules using 4 electrons from cytochrome c in the IMS and 4 protons from the mitochondrial matrix. This is Cytochrome c oxidase subunit 2 (MT-CO2) from Pan paniscus (Pygmy chimpanzee).